We begin with the raw amino-acid sequence, 67 residues long: Conotoxin Cl6.10 (67 aa).

A signal peptide spans 1–24; that stretch reads MKLTCVLIAAVLLLAVCQLDSADA. Positions 25–37 are excised as a propeptide; it reads TAYMRKDPSLRSP. Cystine bridges form between Cys43–Cys57, Cys50–Cys61, and Cys56–Cys65.

Belongs to the conotoxin O1 superfamily. As to expression, expressed by the venom duct.

The protein localises to the secreted. This Californiconus californicus (California cone) protein is Conotoxin Cl6.10.